We begin with the raw amino-acid sequence, 156 residues long: RNA pyrophosphohydrolase (156 aa).

The region spanning 6–148 (NYRPNVAAIV…KKNIYVKVIK (143 aa)) is the Nudix hydrolase domain. The Nudix box signature appears at 43-64 (GGIDKGESVKNALFRELKEEIG).

Belongs to the Nudix hydrolase family. RppH subfamily. The cofactor is a divalent metal cation.

Its function is as follows. Accelerates the degradation of transcripts by removing pyrophosphate from the 5'-end of triphosphorylated RNA, leading to a more labile monophosphorylated state that can stimulate subsequent ribonuclease cleavage. The protein is RNA pyrophosphohydrolase of Campylobacter jejuni subsp. jejuni serotype O:6 (strain 81116 / NCTC 11828).